We begin with the raw amino-acid sequence, 25 residues long: Alpha-lytic protease (25 aa).

The protein belongs to the peptidase S1 family.

It catalyses the reaction Preferential cleavage: Ala-|-Xaa, Val-|-Xaa in bacterial cell walls, elastin and other proteins.. This chain is Alpha-lytic protease, found in Achromobacter lyticus.